The primary structure comprises 379 residues: Deoxyhypusine synthase (379 aa).

Residues 108–112 (SNLIS), 134–136 (TAG), glutamate 140, and aspartate 257 contribute to the NAD(+) site. 139-140 (EE) provides a ligand contact to spermidine. Aspartate 262 is a binding site for spermidine. Glycine 304 contributes to the NAD(+) binding site. Residue histidine 309 participates in spermidine binding. NAD(+) is bound at residue 329 to 330 (TG). Residues 335 to 337 (GSD) and 344 to 350 (EAVSWGK) contribute to the spermidine site. Residue lysine 350 is the Nucleophile of the active site. 363–364 (DA) is a binding site for NAD(+).

Belongs to the deoxyhypusine synthase family. NAD(+) serves as cofactor.

The enzyme catalyses [eIF5A protein]-L-lysine + spermidine = [eIF5A protein]-deoxyhypusine + propane-1,3-diamine. It functions in the pathway protein modification; eIF5A hypusination. In terms of biological role, catalyzes the NAD-dependent oxidative cleavage of spermidine and the subsequent transfer of the butylamine moiety of spermidine to the epsilon-amino group of a specific lysine residue of the eIF-5A precursor protein to form the intermediate deoxyhypusine residue. In Kluyveromyces lactis (strain ATCC 8585 / CBS 2359 / DSM 70799 / NBRC 1267 / NRRL Y-1140 / WM37) (Yeast), this protein is Deoxyhypusine synthase (DYS1).